A 316-amino-acid polypeptide reads, in one-letter code: Ribosomal RNA small subunit methyltransferase H (316 aa).

S-adenosyl-L-methionine contacts are provided by residues 32–34, Asp52, Phe79, Asp106, and Gln113; that span reads AGH.

Belongs to the methyltransferase superfamily. RsmH family.

It localises to the cytoplasm. The catalysed reaction is cytidine(1402) in 16S rRNA + S-adenosyl-L-methionine = N(4)-methylcytidine(1402) in 16S rRNA + S-adenosyl-L-homocysteine + H(+). Its function is as follows. Specifically methylates the N4 position of cytidine in position 1402 (C1402) of 16S rRNA. The chain is Ribosomal RNA small subunit methyltransferase H from Paenibacillus sp. (strain JDR-2).